Here is a 188-residue protein sequence, read N- to C-terminus: dCTP deaminase (188 aa).

Residues 111–116, 135–137, Gln-156, Tyr-170, and Gln-180 each bind dCTP; these read KSTYAR and TLE. Residue Glu-137 is the Proton donor/acceptor of the active site.

This sequence belongs to the dCTP deaminase family. As to quaternary structure, homotrimer.

It catalyses the reaction dCTP + H2O + H(+) = dUTP + NH4(+). Its pathway is pyrimidine metabolism; dUMP biosynthesis; dUMP from dCTP (dUTP route): step 1/2. Its function is as follows. Catalyzes the deamination of dCTP to dUTP. In Legionella pneumophila (strain Paris), this protein is dCTP deaminase.